We begin with the raw amino-acid sequence, 544 residues long: Probable acyl-activating enzyme 8 (544 aa).

Belongs to the ATP-dependent AMP-binding enzyme family. Expressed at low levels in roots, leaves, stems, flowers and developing seeds.

Functionally, may act as an acid--thiol ligase that activates carboxylic acids by forming acyl-CoAs. In Arabidopsis thaliana (Mouse-ear cress), this protein is Probable acyl-activating enzyme 8 (AAE8).